A 189-amino-acid chain; its full sequence is GTPase NRas (189 aa).

GTP-binding positions include Gly10 to Ala18 and Val29 to Asp30. The Effector region signature appears at Tyr32 to Tyr40. Asp57–Gln61 is a binding site for GTP. Phosphoserine is present on Ser89. Residue Asn116 to Asp119 coordinates GTP. Residues Tyr166–Pro185 form a hypervariable region region. Lys170 participates in a covalent cross-link: Glycyl lysine isopeptide (Lys-Gly) (interchain with G-Cter in ubiquitin). Cys181 carries the S-palmitoyl cysteine lipid modification. Cys186 is lipidated: S-farnesyl cysteine. The propeptide at Val187–Met189 is removed in mature form.

Belongs to the small GTPase superfamily. Ras family. As to quaternary structure, interacts (active GTP-bound form preferentially) with RGS14. Interacts (active GTP-bound form) with RASSF7. Interacts (active GTP-bound form) with both SHOC2 and PP1c (all isoforms) to form a tertiary complex; SHOC2 and PP1c preferably bind M-Ras/MRAS, but they also bind K-Ras/KRAS, N-Ras/NRAS and H-Ras/HRAS. Post-translationally, palmitoylated by the ZDHHC9-GOLGA7 complex. Depalmitoylated by ABHD17A, ABHD17B and ABHD17C. A continuous cycle of de- and re-palmitoylation regulates rapid exchange between plasma membrane and Golgi. In terms of processing, acetylation at Lys-104 prevents interaction with guanine nucleotide exchange factors (GEFs). Ubiquitinated by the BCR(LZTR1) E3 ubiquitin ligase complex at Lys-170 in a non-degradative manner, leading to inhibit Ras signaling by decreasing Ras association with membranes. Post-translationally, phosphorylation at Ser-89 enhances NRAS association with its downstream effectors.

It is found in the cell membrane. The protein localises to the golgi apparatus membrane. The enzyme catalyses GTP + H2O = GDP + phosphate + H(+). With respect to regulation, alternates between an inactive form bound to GDP and an active form bound to GTP. Activated by a guanine nucleotide-exchange factor (GEF) and inactivated by a GTPase-activating protein (GAP). Its function is as follows. Ras proteins bind GDP/GTP and possess intrinsic GTPase activity. The chain is GTPase NRas (NRAS) from Cavia porcellus (Guinea pig).